Reading from the N-terminus, the 77-residue chain is Conotoxin VnMEKL-0223 (77 aa).

Positions 1–19 (MQKLTILLLVAAVLMSTQA) are cleaved as a signal peptide. Residues 20-37 (LIKGGGEKRPKEKIKFLS) constitute a propeptide that is removed on maturation. Disulfide bonds link Cys51-Cys65, Cys58-Cys69, and Cys64-Cys74.

This sequence belongs to the conotoxin O2 superfamily. Expressed by the venom duct.

The protein resides in the secreted. The polypeptide is Conotoxin VnMEKL-0223 (Conus ventricosus (Mediterranean cone)).